Consider the following 557-residue polypeptide: Nucleoprotein (557 aa).

The segment at M54–I235 is binding site for the cap structure m7GTP. 2 residues coordinate Mn(2+): D379 and E381. Zn(2+) is bound by residues E389, C496, H499, and C518. D522 provides a ligand contact to Mn(2+).

This sequence belongs to the arenaviridae nucleocapsid protein family. As to quaternary structure, homomultimerizes to form the nucleocapsid. Binds to viral genomic RNA. Interacts with glycoprotein G2. Interacts with protein Z; this interaction probably directs the encapsidated genome to budding sites. Interacts with protein L; this interaction does not interfere with Z-L interaction. Interacts with host IKBKE (via Protein kinase domain); the interaction inhibits IKBKE kinase activity.

The protein resides in the virion. Its subcellular location is the host cytoplasm. Its function is as follows. Encapsidates the genome, protecting it from nucleases. The encapsidated genomic RNA is termed the nucleocapsid (NC). Serves as template for viral transcription and replication. The increased presence of protein N in host cell does not seem to trigger the switch from transcription to replication as observed in other negative strain RNA viruses. Through the interaction with host IKBKE, strongly inhibits the phosphorylation and nuclear translocation of host IRF3, a protein involved in interferon activation pathway, leading to the inhibition of interferon-beta and IRF3-dependent promoters activation. Also encodes a functional 3'-5' exoribonuclease that degrades preferentially dsRNA substrates and thereby participates in the suppression of interferon induction. The protein is Nucleoprotein of Calomys callosus (Large vesper mouse).